We begin with the raw amino-acid sequence, 360 residues long: Squamosa promoter-binding-like protein 7 (360 aa).

A compositionally biased stretch (gly residues) spans 74 to 89 (AQGSGGGGGGGGGGSA). The tract at residues 74–98 (AQGSGGGGGGGGGGSADQGKRKEKA) is disordered. The SBP-type zinc-finger motif lies at 105-182 (VPRCQVEGCD…AGHNERRRRS (78 aa)). Positions 108, 113, 130, 133, 149, 152, 156, and 168 each coordinate Zn(2+). Positions 165–181 (KKSCRRRLAGHNERRRR) match the Bipartite nuclear localization signal motif. A compositionally biased stretch (basic residues) spans 172–182 (LAGHNERRRRS). 3 disordered regions span residues 172-196 (LAGH…AHPH), 261-306 (FFSD…HEHQ), and 320-360 (AAGG…ARVV).

Expressed in young panicles.

The protein resides in the nucleus. Its function is as follows. Trans-acting factor that binds specifically to the consensus nucleotide sequence 5'-TNCGTACAA-3'. May be involved in panicle development. This Oryza sativa subsp. indica (Rice) protein is Squamosa promoter-binding-like protein 7 (SPL7).